The following is a 56-amino-acid chain: Ferredoxin (56 aa).

4Fe-4S ferredoxin-type domains are found at residues 2–29 and 29–56; these read AYVI…AGDD and DKYV…PQPE. Residues cysteine 9, cysteine 12, cysteine 15, cysteine 19, cysteine 38, cysteine 41, cysteine 44, and cysteine 48 each contribute to the [4Fe-4S] cluster site.

Requires [4Fe-4S] cluster as cofactor.

Its function is as follows. Ferredoxins are iron-sulfur proteins that transfer electrons in a wide variety of metabolic reactions. The polypeptide is Ferredoxin (Acetoanaerobium sticklandii (strain ATCC 12662 / DSM 519 / JCM 1433 / CCUG 9281 / NCIMB 10654 / HF) (Clostridium sticklandii)).